Reading from the N-terminus, the 378-residue chain is Succinyl-diaminopimelate desuccinylase (378 aa).

Histidine 68 contacts Zn(2+). Residue aspartate 70 is part of the active site. Position 102 (aspartate 102) interacts with Zn(2+). The active-site Proton acceptor is glutamate 136. Zn(2+)-binding residues include glutamate 137, glutamate 165, and histidine 351.

This sequence belongs to the peptidase M20A family. DapE subfamily. Homodimer. It depends on Zn(2+) as a cofactor. The cofactor is Co(2+).

The enzyme catalyses N-succinyl-(2S,6S)-2,6-diaminopimelate + H2O = (2S,6S)-2,6-diaminopimelate + succinate. Its pathway is amino-acid biosynthesis; L-lysine biosynthesis via DAP pathway; LL-2,6-diaminopimelate from (S)-tetrahydrodipicolinate (succinylase route): step 3/3. Catalyzes the hydrolysis of N-succinyl-L,L-diaminopimelic acid (SDAP), forming succinate and LL-2,6-diaminopimelate (DAP), an intermediate involved in the bacterial biosynthesis of lysine and meso-diaminopimelic acid, an essential component of bacterial cell walls. This is Succinyl-diaminopimelate desuccinylase from Pseudomonas syringae pv. syringae.